A 302-amino-acid polypeptide reads, in one-letter code: Quinolinate synthase (302 aa).

2 residues coordinate iminosuccinate: His-25 and Ser-42. Cys-87 is a [4Fe-4S] cluster binding site. Residues 113–115 (YVN) and Ser-130 each bind iminosuccinate. Cys-172 lines the [4Fe-4S] cluster pocket. Residues 198–200 (HPE) and Thr-215 contribute to the iminosuccinate site. [4Fe-4S] cluster is bound at residue Cys-260.

Belongs to the quinolinate synthase family. Type 2 subfamily. [4Fe-4S] cluster is required as a cofactor.

The protein resides in the cytoplasm. It carries out the reaction iminosuccinate + dihydroxyacetone phosphate = quinolinate + phosphate + 2 H2O + H(+). Its pathway is cofactor biosynthesis; NAD(+) biosynthesis; quinolinate from iminoaspartate: step 1/1. Its function is as follows. Catalyzes the condensation of iminoaspartate with dihydroxyacetone phosphate to form quinolinate. This is Quinolinate synthase from Methanoregula boonei (strain DSM 21154 / JCM 14090 / 6A8).